We begin with the raw amino-acid sequence, 627 residues long: Threonine--tRNA ligase (627 aa).

The segment at D221–P523 is catalytic. The Zn(2+) site is built by C319, H370, and H500.

Belongs to the class-II aminoacyl-tRNA synthetase family. In terms of assembly, homodimer. Zn(2+) serves as cofactor.

It is found in the cytoplasm. The enzyme catalyses tRNA(Thr) + L-threonine + ATP = L-threonyl-tRNA(Thr) + AMP + diphosphate + H(+). Functionally, catalyzes the attachment of threonine to tRNA(Thr) in a two-step reaction: L-threonine is first activated by ATP to form Thr-AMP and then transferred to the acceptor end of tRNA(Thr). Also edits incorrectly charged L-seryl-tRNA(Thr). This Gloeobacter violaceus (strain ATCC 29082 / PCC 7421) protein is Threonine--tRNA ligase.